Consider the following 119-residue polypeptide: Large ribosomal subunit protein bL20 (119 aa).

It belongs to the bacterial ribosomal protein bL20 family.

Functionally, binds directly to 23S ribosomal RNA and is necessary for the in vitro assembly process of the 50S ribosomal subunit. It is not involved in the protein synthesizing functions of that subunit. The protein is Large ribosomal subunit protein bL20 of Bradyrhizobium sp. (strain BTAi1 / ATCC BAA-1182).